We begin with the raw amino-acid sequence, 158 residues long: Transcriptional repressor NrdR (158 aa).

Residues 3-34 fold into a zinc finger; the sequence is CPSCQNTDSRVLESRAADGGRSVRRRRECLNC. The region spanning 49 to 139 is the ATP-cone domain; sequence ITVIKRDGCR…VYRQFRGIDD (91 aa).

It belongs to the NrdR family. Requires Zn(2+) as cofactor.

Its function is as follows. Negatively regulates transcription of bacterial ribonucleotide reductase nrd genes and operons by binding to NrdR-boxes. The protein is Transcriptional repressor NrdR of Synechococcus sp. (strain CC9902).